Reading from the N-terminus, the 210-residue chain is Cytochrome c biogenesis ATP-binding export protein CcmA (210 aa).

In terms of domain architecture, ABC transporter spans 3 to 205 (LHLQAAGLAC…KPSGYRELNL (203 aa)). An ATP-binding site is contributed by 37 to 44 (GPNGSGKT).

The protein belongs to the ABC transporter superfamily. CcmA exporter (TC 3.A.1.107) family. As to quaternary structure, the complex is composed of two ATP-binding proteins (CcmA) and two transmembrane proteins (CcmB).

Its subcellular location is the cell inner membrane. It catalyses the reaction heme b(in) + ATP + H2O = heme b(out) + ADP + phosphate + H(+). In terms of biological role, part of the ABC transporter complex CcmAB involved in the biogenesis of c-type cytochromes; once thought to export heme, this seems not to be the case, but its exact role is uncertain. Responsible for energy coupling to the transport system. The polypeptide is Cytochrome c biogenesis ATP-binding export protein CcmA (Pseudomonas putida (strain ATCC 47054 / DSM 6125 / CFBP 8728 / NCIMB 11950 / KT2440)).